The sequence spans 120 residues: Large ribosomal subunit protein bL17 (120 aa).

The protein belongs to the bacterial ribosomal protein bL17 family. As to quaternary structure, part of the 50S ribosomal subunit. Contacts protein L32.

The sequence is that of Large ribosomal subunit protein bL17 from Geobacillus sp. (strain WCH70).